The primary structure comprises 566 residues: Pentatricopeptide repeat-containing protein At4g11690 (566 aa).

PPR repeat units follow at residues 93 to 127, 128 to 158, 162 to 196, 197 to 231, 232 to 266, 267 to 301, 302 to 336, 337 to 371, 372 to 406, 407 to 441, 442 to 476, 477 to 511, and 512 to 546; these read KFRL…GFVP, GSNC…NKSK, DVYS…GFSP, NVVI…GLVA, NERT…GVFP, NLYT…GVSC, NIVT…GINP, NLIT…GLSP, SLVT…GIKP, SKVT…GLVP, DVHT…NCEP, NEVI…ELAP, and NVAS…GIDP.

Belongs to the PPR family. P subfamily.

The chain is Pentatricopeptide repeat-containing protein At4g11690 from Arabidopsis thaliana (Mouse-ear cress).